Reading from the N-terminus, the 411-residue chain is Heterogeneous nuclear ribonucleoprotein 1 (411 aa).

Positions 6–82 (GKLFVGGISW…REVDVKRAMS (77 aa)) constitute an RRM 1 domain. 3 disordered regions span residues 81–103 (MSRE…SSGG), 183–221 (KRAL…DGRM), and 358–411 (AAYG…RQGQ). Residues 87–101 (QVSGRTGNLNTSRSS) show a composition bias toward polar residues. Residues 110 to 187 (KKIFVGGLPP…KQVEVKRALP (78 aa)) form the RRM 2 domain. Gly residues-rich tracts occupy residues 192 to 212 (PGGG…GYGG), 362 to 387 (VVGG…GYGD), and 397 to 411 (GYGG…RQGQ). The tract at residues 341 to 390 (GYGYGGYSGSDSGYGNQAAYGVVGGRPSGGGSNNPGSGGYMGGGYGDGSW) is nuclear targeting sequence (M9).

As to quaternary structure, component of the spliceosome. Interacts with TRN1.

The protein resides in the nucleus. It localises to the cytoplasm. Involved with pre-mRNA processing. Forms complexes (ribonucleosomes) with at least 20 other different hnRNP and heterogeneous nuclear RNA in the nucleus. Its function is as follows. Involved in the packaging of pre-mRNA into hnRNP particles, transport of poly(A) mRNA from the nucleus to the cytoplasm and may modulate splice site selection. The chain is Heterogeneous nuclear ribonucleoprotein 1 (RNP1) from Arabidopsis thaliana (Mouse-ear cress).